The following is a 318-amino-acid chain: Serine protease 41 (318 aa).

An N-terminal signal peptide occupies residues 1 to 19 (MGARGALLLALLLARAGLG). The propeptide occupies 20–54 (KPGELGALQAGPGAARRPGGGGREEACGHREIHAL). Residues 55-297 (VAGGVESARG…YFHWIRRVMS (243 aa)) enclose the Peptidase S1 domain. Cysteines 80 and 96 form a disulfide. Catalysis depends on charge relay system residues His-95 and Asp-147. 3 cysteine pairs are disulfide-bonded: Cys-181–Cys-255, Cys-215–Cys-234, and Cys-245–Cys-273. A glycan (N-linked (GlcNAc...) asparagine) is linked at Asn-211. Ser-249 serves as the catalytic Charge relay system. A glycan (N-linked (GlcNAc...) asparagine) is linked at Asn-284. Ser-299 carries GPI-anchor amidated serine lipidation. Residues 300–318 (TPRPNPSQLLLLLALLWAP) constitute a propeptide, removed in mature form.

It belongs to the peptidase S1 family. In terms of processing, N-glycosylated.

It localises to the cell membrane. In Homo sapiens (Human), this protein is Serine protease 41.